The chain runs to 365 residues: MDFSNINGFVVLDKPQGPTSHQVDHWVREILGIEKVAHIGTLDPNVTGVLTMAIGKAVRLVDVVHESPKEYVGVMRFYEDITEEEVRYYFKKFTGRIYQLPPVRSAVARSLRIKTVYSLDLLEKKDRLVLFHVKCESGTYIRTLCTDIGYVSGKGGQMVDLRRTSTGPFSEDRCITLQDFAAMVELARKGEDKLLRDHILDMTYAFKDYPKIVVKRSAMRNIAHGSDLYAGGIKIIDGKFRKGERVAVISEDNDLVGTGIAMCSSDNIFMKVVDFDHIFLEADDGKDNVVRIGKEAVQKSGSGLHKDIQRSEGRKDTRTGWYGRDTGPEKTADRVWKGKNKGRVYPRSGADKGGGGKERHGRDHQ.

The active-site Nucleophile is aspartate 43. A PUA domain is found at 209 to 285 (YPKIVVKRSA…DHIFLEADDG (77 aa)). The segment at 300 to 365 (SGSGLHKDIQ…GKERHGRDHQ (66 aa)) is disordered. Basic and acidic residues-rich tracts occupy residues 304–318 (LHKD…KDTR), 326–336 (TGPEKTADRVW), and 354–365 (GGGKERHGRDHQ).

It belongs to the pseudouridine synthase TruB family. Type 2 subfamily.

It catalyses the reaction uridine(55) in tRNA = pseudouridine(55) in tRNA. Its function is as follows. Could be responsible for synthesis of pseudouridine from uracil-55 in the psi GC loop of transfer RNAs. This chain is Probable tRNA pseudouridine synthase B, found in Thermoplasma acidophilum (strain ATCC 25905 / DSM 1728 / JCM 9062 / NBRC 15155 / AMRC-C165).